Consider the following 390-residue polypeptide: GTPase Obg (390 aa).

In terms of domain architecture, Obg spans methionine 1 to leucine 159. Positions alanine 160–aspartate 333 constitute an OBG-type G domain. GTP-binding positions include glycine 166–serine 173, phenylalanine 191–isoleucine 195, aspartate 213–glycine 216, asparagine 283–aspartate 286, and alanine 314–valine 316. Positions 173 and 193 each coordinate Mg(2+).

This sequence belongs to the TRAFAC class OBG-HflX-like GTPase superfamily. OBG GTPase family. In terms of assembly, monomer. The cofactor is Mg(2+).

It localises to the cytoplasm. An essential GTPase which binds GTP, GDP and possibly (p)ppGpp with moderate affinity, with high nucleotide exchange rates and a fairly low GTP hydrolysis rate. Plays a role in control of the cell cycle, stress response, ribosome biogenesis and in those bacteria that undergo differentiation, in morphogenesis control. This is GTPase Obg from Aliivibrio fischeri (strain MJ11) (Vibrio fischeri).